The sequence spans 64 residues: Large ribosomal subunit protein bL35 (64 aa).

This sequence belongs to the bacterial ribosomal protein bL35 family.

In Carboxydothermus hydrogenoformans (strain ATCC BAA-161 / DSM 6008 / Z-2901), this protein is Large ribosomal subunit protein bL35.